Reading from the N-terminus, the 711-residue chain is MEKRGPKRRQQAAHLSCELCRERKVKCDKLDPCTNCSSAGVICVPVRRPRLPRGAHAQRLRRNSPEDPEAPIQIDIASPADAGTIADDDLKKRIRRLEALVDSMRSSSHISKQDQEAEDTIESTLNRIDDDSLLIKTPRVHPSDGGLRILGLSGSSSPETGWASILEDREISMQLCQVYLLNVDPVIKILHRPSVEKWMLQGQRYLGFPERHSAVESLGAAICYVAATSLTETQSWARFHATKSSIVARARRACETTLEKSSPLLSPVITTLQAFLLYLHESFIEQNVLIPLKTHQVARRSEDPSRAVWTLMAFAVRIAKALDLPRGAGDNFFGQQMRKRLWLAICLLDFQTSLSQPSEPLITVAEATSSFSPPKHINDSDFDPTTSHDVPDREGLTDTTFSLVSYHVQAAGRLLNFEPSVKDDGSRQQNVQHFEQRTLRLLLYCDPESTPYAWFTWHRIQCFVSGARLSAIRPLMHQHGDHPISILDTNEGTSILSLALNILEKVQLVHTDPRGEAFRWFVTVPWQPLAIAMSECYICQDIALVQRAWPIVEAAFQQHEATVSGSSKAISITLERLMCRVREKLSPSLGTSTSLTASPIFCATNTANTLSVPHTPPSRSSITSSGDLLGNWSWTTATELLRPGEDLALVTEAPISTSPQKIDPLLFSLDSQLLIAGQEQLVEADQSWAAWDEVIASLHDDETGRANMFLS.

A DNA-binding region (zn(2)-C6 fungal-type) is located at residues Cys17–Cys43. Positions Ser372 to Glu394 are disordered.

Its subcellular location is the nucleus. In terms of biological role, transcription factor that specifically regulates the neosartoricin B biosynthesis gene cluster. In Trichophyton tonsurans (strain CBS 112818) (Scalp ringworm fungus), this protein is C6 finger domain transcription factor nscR.